The following is a 207-amino-acid chain: Ribosomal RNA small subunit methyltransferase G (207 aa).

S-adenosyl-L-methionine-binding positions include Gly74, Leu79, 125-126 (VE), and Arg140.

The protein belongs to the methyltransferase superfamily. RNA methyltransferase RsmG family.

The protein resides in the cytoplasm. The catalysed reaction is guanosine(527) in 16S rRNA + S-adenosyl-L-methionine = N(7)-methylguanosine(527) in 16S rRNA + S-adenosyl-L-homocysteine. Specifically methylates the N7 position of guanine in position 527 of 16S rRNA. The sequence is that of Ribosomal RNA small subunit methyltransferase G from Shewanella loihica (strain ATCC BAA-1088 / PV-4).